Consider the following 645-residue polypeptide: Exoribonuclease 2 (645 aa).

One can recognise an RNB domain in the interval Arg-191–Ile-517. In terms of domain architecture, S1 motif spans His-563–Val-645.

Belongs to the RNR ribonuclease family. RNase II subfamily.

It is found in the cytoplasm. The catalysed reaction is Exonucleolytic cleavage in the 3'- to 5'-direction to yield nucleoside 5'-phosphates.. Its function is as follows. Involved in mRNA degradation. Hydrolyzes single-stranded polyribonucleotides processively in the 3' to 5' direction. This Baumannia cicadellinicola subsp. Homalodisca coagulata protein is Exoribonuclease 2.